A 182-amino-acid polypeptide reads, in one-letter code: HGPRTase-like protein 1 (182 aa).

This sequence belongs to the purine/pyrimidine phosphoribosyltransferase family. Archaeal HPRT subfamily.

May catalyze a purine salvage reaction, the substrate is unknown. This is HGPRTase-like protein 1 from Haloarcula marismortui (strain ATCC 43049 / DSM 3752 / JCM 8966 / VKM B-1809) (Halobacterium marismortui).